The sequence spans 457 residues: Multidrug resistance protein MdtK (457 aa).

12 helical membrane-spanning segments follow: residues 11-31, 53-73, 93-113, 127-147, 160-180, 188-208, 243-263, 276-296, 314-334, 350-370, 387-407, and 418-438; these read LLAL…MGFV, IWLP…PVIA, WLAG…GYII, AVGY…FQVA, GMVM…IFIY, LGGI…FIAM, LPIA…ALLV, IALN…AAVT, AART…IFTV, VVAL…SDSI, IFFI…YILA, and PAGF…LMML.

This sequence belongs to the multi antimicrobial extrusion (MATE) (TC 2.A.66.1) family. MdtK subfamily.

Its subcellular location is the cell inner membrane. Multidrug efflux pump that functions probably as a Na(+)/drug antiporter. In Salmonella enteritidis PT4 (strain P125109), this protein is Multidrug resistance protein MdtK.